The following is a 392-amino-acid chain: GTPase Obg (392 aa).

One can recognise an Obg domain in the interval 1-159 (MKFVDEATIL…RDLQLELMLL (159 aa)). Residues 127–146 (NTRFKSSVNRTPRQKTMGTP) form a disordered region. Residues 129–143 (RFKSSVNRTPRQKTM) show a composition bias toward polar residues. Residues 160 to 333 (ADVGMLGLPN…LCWDVMAFIK (174 aa)) enclose the OBG-type G domain. Residues 166-173 (GLPNAGKS), 191-195 (FTTLV), 213-216 (DIPG), 283-286 (NKVD), and 314-316 (SAA) contribute to the GTP site. Residues Ser173 and Thr193 each contribute to the Mg(2+) site. The interval 360–392 (QLEEAQPEVEEDDDWDDDWDEDDEEGVETIYQR) is disordered. Acidic residues predominate over residues 364 to 386 (AQPEVEEDDDWDDDWDEDDEEGV).

This sequence belongs to the TRAFAC class OBG-HflX-like GTPase superfamily. OBG GTPase family. Monomer. Mg(2+) serves as cofactor.

It is found in the cytoplasm. Its function is as follows. An essential GTPase which binds GTP, GDP and possibly (p)ppGpp with moderate affinity, with high nucleotide exchange rates and a fairly low GTP hydrolysis rate. Plays a role in control of the cell cycle, stress response, ribosome biogenesis and in those bacteria that undergo differentiation, in morphogenesis control. This is GTPase Obg from Erwinia tasmaniensis (strain DSM 17950 / CFBP 7177 / CIP 109463 / NCPPB 4357 / Et1/99).